A 375-amino-acid chain; its full sequence is Peptide-N(4)-(N-acetyl-beta-glucosaminyl)asparagine amidase (375 aa).

Zn(2+) contacts are provided by cysteine 129, cysteine 132, cysteine 163, and cysteine 166. Catalysis depends on cysteine 189, which acts as the Nucleophile. Catalysis depends on residues histidine 219 and aspartate 236. Glutamate 239 provides a ligand contact to substrate. The disordered stretch occupies residues 345 to 375 (KIEVSRTHNIPTGRQTGDAEWTKSRGEDGNE). Basic and acidic residues predominate over residues 364–375 (EWTKSRGEDGNE).

This sequence belongs to the transglutaminase-like superfamily. PNGase family. It depends on Zn(2+) as a cofactor.

The protein localises to the cytoplasm. The enzyme catalyses Hydrolysis of an N(4)-(acetyl-beta-D-glucosaminyl)asparagine residue in which the glucosamine residue may be further glycosylated, to yield a (substituted) N-acetyl-beta-D-glucosaminylamine and a peptide containing an aspartate residue.. In terms of biological role, specifically deglycosylates the denatured form of N-linked glycoproteins in the cytoplasm and assists their proteasome-mediated degradation. Cleaves the beta-aspartyl-glucosamine (GlcNAc) of the glycan and the amide side chain of Asn, converting Asn to Asp. Prefers proteins containing high-mannose over those bearing complex type oligosaccharides. Can recognize misfolded proteins in the endoplasmic reticulum that are exported to the cytosol to be destroyed and deglycosylate them, while it has no activity toward native proteins. Deglycosylation is a prerequisite for subsequent proteasome-mediated degradation of some, but not all, misfolded glycoproteins. The sequence is that of Peptide-N(4)-(N-acetyl-beta-glucosaminyl)asparagine amidase (PNG1) from Debaryomyces hansenii (strain ATCC 36239 / CBS 767 / BCRC 21394 / JCM 1990 / NBRC 0083 / IGC 2968) (Yeast).